Here is a 513-residue protein sequence, read N- to C-terminus: Ribonuclease Y (513 aa).

The helical transmembrane segment at 4-24 (NTAIIIAITTGFVAFIGGYFL) threads the bilayer. In terms of domain architecture, KH spans 203–266 (TVAVIPLPNE…ETARMALEKL (64 aa)). Positions 329–422 (VLKHSVEVAY…IQAADAISAA (94 aa)) constitute an HD domain.

The protein belongs to the RNase Y family.

The protein resides in the cell membrane. Its function is as follows. Endoribonuclease that initiates mRNA decay. In Desulforudis audaxviator (strain MP104C), this protein is Ribonuclease Y.